We begin with the raw amino-acid sequence, 73 residues long: Aldehyde dehydrogenase (73 aa).

The protein belongs to the aldehyde dehydrogenase family.

The enzyme catalyses an aldehyde + NAD(+) + H2O = a carboxylate + NADH + 2 H(+). It functions in the pathway alcohol metabolism; ethanol degradation; acetate from ethanol: step 2/2. This Geobacillus stearothermophilus (Bacillus stearothermophilus) protein is Aldehyde dehydrogenase.